The following is a 508-amino-acid chain: Purine-cytosine permease fcyB (508 aa).

Over 1-72 (MAGAFDFDLE…AEQTDTSVFN (72 aa)) the chain is Cytoplasmic. A helical membrane pass occupies residues 73–93 (IGSMWLAANMVVSSFAIGVLG). The Extracellular portion of the chain corresponds to 94–104 (KSVYSLGFVDA). The chain crosses the membrane as a helical span at residues 105–125 (ILTVLFFNLLGIMTVCFFSCF). Residues 126–147 (GPFGLRQMVFSRLWFGWYVTKG) lie on the Cytoplasmic side of the membrane. Residues 148 to 168 (FAVLNILACLGWSAANAIVGA) form a helical membrane-spanning segment. Topologically, residues 169–177 (QMLHAVNSD) are extracellular. The helical transmembrane segment at 178–198 (VPGFAAILIISICTLLVTFAG) threads the bilayer. The Cytoplasmic portion of the chain corresponds to 199-200 (YK). The helical transmembrane segment at 201-221 (VVHLYEYWSWIPTFIVFMIIL) threads the bilayer. Residues 222–243 (GTFAHSGDFQNIPMGVGTSEMG) are Extracellular-facing. Residues 244 to 264 (SVLSFGSAVYGFATGWTSYAA) traverse the membrane as a helical segment. Over 265 to 278 (DYTVYQPANRSKRK) the chain is Cytoplasmic. The helical transmembrane segment at 279–299 (IFLSTWLGLIVPLLFVEMLGV) threads the bilayer. Residues 300-323 (AVMTATDIKGSKYDVGYATSGNGG) lie on the Extracellular side of the membrane. The helical transmembrane segment at 324 to 344 (LIAAVLQPLGGFGDFCLVILA) threads the bilayer. The Cytoplasmic segment spans residues 345 to 374 (LSIVANNCPNFYSVALTVQVLSRYAQRVPR). The chain crosses the membrane as a helical span at residues 375–395 (FIWTLFGTGVSIAIAIPGYSH). At 396-404 (FETVLENFM) the chain is on the extracellular side. A helical membrane pass occupies residues 405–425 (NFIAYWLAIYSAIAIMDHFVF). At 426 to 442 (KRGFSGYVVENFDKREK) the chain is on the cytoplasmic side. The chain crosses the membrane as a helical span at residues 443–463 (LPVGIAATIAFGFGVAGMITG). The Extracellular segment spans residues 464–477 (MSQPWYVGPIARHA). Residues 478–498 (AGGDVGFELGFAFAAFSYLCL) traverse the membrane as a helical segment. Residues 499 to 508 (RPFEIKFFGR) are Cytoplasmic-facing.

Belongs to the purine-cytosine permease (2.A.39) family.

It localises to the cell membrane. Its function is as follows. This permease has a broad specificity towards purines, and also transports cytosine, but neither uracil nor thymine. Contributes very little in purine uptake. Its major role may be the uptake of cytosine. This Emericella nidulans (strain FGSC A4 / ATCC 38163 / CBS 112.46 / NRRL 194 / M139) (Aspergillus nidulans) protein is Purine-cytosine permease fcyB (fcyB).